The sequence spans 245 residues: 1-(5-phosphoribosyl)-5-[(5-phosphoribosylamino)methylideneamino] imidazole-4-carboxamide isomerase (245 aa).

The Proton acceptor role is filled by D7. The active-site Proton donor is D129.

This sequence belongs to the HisA/HisF family.

The protein resides in the cytoplasm. It catalyses the reaction 1-(5-phospho-beta-D-ribosyl)-5-[(5-phospho-beta-D-ribosylamino)methylideneamino]imidazole-4-carboxamide = 5-[(5-phospho-1-deoxy-D-ribulos-1-ylimino)methylamino]-1-(5-phospho-beta-D-ribosyl)imidazole-4-carboxamide. It functions in the pathway amino-acid biosynthesis; L-histidine biosynthesis; L-histidine from 5-phospho-alpha-D-ribose 1-diphosphate: step 4/9. The protein is 1-(5-phosphoribosyl)-5-[(5-phosphoribosylamino)methylideneamino] imidazole-4-carboxamide isomerase of Shewanella frigidimarina (strain NCIMB 400).